The sequence spans 528 residues: Chaperonin GroEL, chloroplastic (528 aa).

ATP contacts are provided by residues Thr29 to Pro32, Asp86 to Thr90, Gly415, Asn481 to Ala483, and Asp497.

It belongs to the chaperonin (HSP60) family. As to quaternary structure, forms a cylinder of 14 subunits composed of two heptameric rings stacked back-to-back. Interacts with the co-chaperonin GroES.

Its subcellular location is the plastid. The protein resides in the chloroplast. It carries out the reaction ATP + H2O + a folded polypeptide = ADP + phosphate + an unfolded polypeptide.. Together with its co-chaperonin GroES, plays an essential role in assisting protein folding. The GroEL-GroES system forms a nano-cage that allows encapsulation of the non-native substrate proteins and provides a physical environment optimized to promote and accelerate protein folding. This Trieres chinensis (Marine centric diatom) protein is Chaperonin GroEL, chloroplastic.